The sequence spans 215 residues: Protein HP-25 homolog 2 (215 aa).

The N-terminal stretch at 1–30 is a signal peptide; that stretch reads MPGRGGQSLSMVCVDVWILALSVLSVMADA. Residues 35–79 are disordered; it reads VTESCDSQGPPGLPGPPGLPGPPGPPGPPGPPGLRGPTGIPGDIE. Positions 43–76 constitute a Collagen-like domain; it reads GPPGLPGPPGLPGPPGPPGPPGPPGLRGPTGIPG. Residues 45-68 are compositionally biased toward pro residues; that stretch reads PGLPGPPGLPGPPGPPGPPGPPGL. Residues 82–215 enclose the C1q domain; sequence LSPPKSAFAV…GYLLYGNYPG (134 aa).

It is found in the secreted. The protein is Protein HP-25 homolog 2 of Bos taurus (Bovine).